The primary structure comprises 156 residues: 6,7-dimethyl-8-ribityllumazine synthase (156 aa).

Residues Phe-23, 57–59, and 81–83 contribute to the 5-amino-6-(D-ribitylamino)uracil site; these read AFE and AVI. 86 to 87 provides a ligand contact to (2S)-2-hydroxy-3-oxobutyl phosphate; it reads ST. The active-site Proton donor is the His-89. A 5-amino-6-(D-ribitylamino)uracil-binding site is contributed by Phe-114. Arg-128 contacts (2S)-2-hydroxy-3-oxobutyl phosphate.

This sequence belongs to the DMRL synthase family.

It catalyses the reaction (2S)-2-hydroxy-3-oxobutyl phosphate + 5-amino-6-(D-ribitylamino)uracil = 6,7-dimethyl-8-(1-D-ribityl)lumazine + phosphate + 2 H2O + H(+). It participates in cofactor biosynthesis; riboflavin biosynthesis; riboflavin from 2-hydroxy-3-oxobutyl phosphate and 5-amino-6-(D-ribitylamino)uracil: step 1/2. In terms of biological role, catalyzes the formation of 6,7-dimethyl-8-ribityllumazine by condensation of 5-amino-6-(D-ribitylamino)uracil with 3,4-dihydroxy-2-butanone 4-phosphate. This is the penultimate step in the biosynthesis of riboflavin. In Campylobacter curvus (strain 525.92), this protein is 6,7-dimethyl-8-ribityllumazine synthase.